Consider the following 111-residue polypeptide: Rhodanese domain-containing protein CG4456 (111 aa).

The Rhodanese domain occupies 12 to 110 (NHPDVYLIDV…SWNEWAQKEG (99 aa)).

The polypeptide is Rhodanese domain-containing protein CG4456 (Drosophila melanogaster (Fruit fly)).